The sequence spans 454 residues: Chromosomal replication initiator protein DnaA (454 aa).

The interval 1-80 is domain I, interacts with DnaA modulators; sequence MNLSNLWQSC…NPELRISLKE (80 aa). Residues 80–117 form a domain II region; that stretch reads EGVKPAPKIVESTPNTSLRSESAVDFQAESSASVKFES. The interval 118–335 is domain III, AAA+ region; sequence HLNTKHLFDN…GALNRVKAMQ (218 aa). ATP-binding residues include G163, G165, K166, and T167. A domain IV, binds dsDNA region spans residues 336–454; it reads DFKGGDIDID…WANLIRTLSA (119 aa).

It belongs to the DnaA family. As to quaternary structure, oligomerizes as a right-handed, spiral filament on DNA at oriC.

The protein localises to the cytoplasm. Functionally, plays an essential role in the initiation and regulation of chromosomal replication. ATP-DnaA binds to the origin of replication (oriC) to initiate formation of the DNA replication initiation complex once per cell cycle. Binds the DnaA box (a 9 base pair repeat at the origin) and separates the double-stranded (ds)DNA. Forms a right-handed helical filament on oriC DNA; dsDNA binds to the exterior of the filament while single-stranded (ss)DNA is stabiized in the filament's interior. The ATP-DnaA-oriC complex binds and stabilizes one strand of the AT-rich DNA unwinding element (DUE), permitting loading of DNA polymerase. After initiation quickly degrades to an ADP-DnaA complex that is not apt for DNA replication. Binds acidic phospholipids. This Haemophilus influenzae (strain ATCC 51907 / DSM 11121 / KW20 / Rd) protein is Chromosomal replication initiator protein DnaA.